The following is a 2564-amino-acid chain: Highly reducing polyketide synthase 40 (2564 aa).

Residues 8 to 432 (PEPIAIIGMS…GTNAHVIVDR (425 aa)) enclose the Ketosynthase family 3 (KS3) domain. Residues Cys-181, His-317, and His-358 each act as for beta-ketoacyl synthase activity in the active site. Residues 435-482 (EHNHSNGTNGTNGTHHHNGTNGSNGNGTNGTNGTNGTDGFHDTESISD) are disordered. Residues 439–455 (SNGTNGTNGTHHHNGTN) show a composition bias toward low complexity. Positions 473–482 (GFHDTESISD) are enriched in basic and acidic residues. Positions 580–914 (YVFGGQGAQY…SAAENMLRTL (335 aa)) are malonyl-CoA:ACP transacylase (MAT) domain. Positions 973-1113 (HELLGNLSAD…GRIRAVVDQG (141 aa)) are N-terminal hotdog fold. Residues 973 to 1280 (HELLGNLSAD…GLRTAQLPSD (308 aa)) form a dehydratase (DH) domain region. In terms of domain architecture, PKS/mFAS DH spans 973–1283 (HELLGNLSAD…TAQLPSDVVN (311 aa)). Catalysis depends on His-1005, which acts as the Proton acceptor; for dehydratase activity. The segment at 1130-1283 (AASVPHHITS…TAQLPSDVVN (154 aa)) is C-terminal hotdog fold. The active-site Proton donor; for dehydratase activity is Asp-1199. Residues 1451–1556 (LEVGGGTASA…RQLLRPGGTL (106 aa)) are methyltransferase (CMet) domain. The segment at 1854–2167 (GLLETFRWVD…AGKHMGKVIL (314 aa)) is enoyl reductase (ER) domain. The ketoreductase (KR) domain stretch occupies residues 2191–2370 (ATYLLVGGFG…SFAIDVGVVS (180 aa)). The Carrier domain maps to 2472-2549 (EALDAVGQAV…ELIHLVAGKS (78 aa)). Ser-2509 bears the O-(pantetheine 4'-phosphoryl)serine mark.

It functions in the pathway secondary metabolite biosynthesis. Its function is as follows. Highly reducing polyketide synthase; part of the gene cluster that mediates the biosynthesis of the lipopeptides W493 A and B. W493 A and B consist of six amino acid residues D-allo-thr, L-Ala, D-Ala, L-Gln, D-Tyr, and L-Val/L-Ile linked to a 3-hydroxy-4-methyltetradecanoic acid polyketide chain. The biosynthesis starts with formation of the linear polyketide chain by the highly reducing polyketide synthase PKS40. The gene cluster contains a putative acyl-CoA ligase (FPSE_09184) for formation of a CoA thioester polyketide. The thiol bond could be hydrolyzed by the putative thioesterase (FPSE_09186) and then accepted by the first T domain in module 1 of NRPS32. The second T domain is responsible for accepting a threonine, which is adenylated by the A domain and epimerized to the D-allo-threonine formed by the E domain. The five successive modules incorporate Ala, Ala, Gln, Tyr, and Val/Ile into the final product, which is released by cyclization. The sequence is that of Highly reducing polyketide synthase 40 from Fusarium pseudograminearum (strain CS3096) (Wheat and barley crown-rot fungus).